Here is a 126-residue protein sequence, read N- to C-terminus: Small ribosomal subunit protein uS13 (126 aa).

The segment at 93–126 (RRGLPVRGQRTKTNARTRKGPKRTVAGKKKAGRK) is disordered.

It belongs to the universal ribosomal protein uS13 family. As to quaternary structure, part of the 30S ribosomal subunit. Forms a loose heterodimer with protein S19. Forms two bridges to the 50S subunit in the 70S ribosome.

In terms of biological role, located at the top of the head of the 30S subunit, it contacts several helices of the 16S rRNA. In the 70S ribosome it contacts the 23S rRNA (bridge B1a) and protein L5 of the 50S subunit (bridge B1b), connecting the 2 subunits; these bridges are implicated in subunit movement. Contacts the tRNAs in the A and P-sites. The chain is Small ribosomal subunit protein uS13 from Beutenbergia cavernae (strain ATCC BAA-8 / DSM 12333 / CCUG 43141 / JCM 11478 / NBRC 16432 / NCIMB 13614 / HKI 0122).